The sequence spans 326 residues: ELAV-like protein 1 (326 aa).

RRM domains lie at 20–98, 106–186, and 244–322; these read TNLI…VARP, ANLY…FAAN, and WCIF…FKTS.

Belongs to the RRM elav family. As to quaternary structure, interacts (via RRM3) with cirbp. Unable to form oligomers. Part of a ribonucleoprotein (RNP) complex, at least composed of elavl1/elrA and/or elavl2/elrB, igf2bp3/vg1RBP, ddx6/Xp54, ybx2/frgy2, lsm14b/rap55b and, in a subset of RNP complexes, stau1/staufen.

Its subcellular location is the cytoplasm. It localises to the cell cortex. In terms of biological role, RNA-binding protein that binds to the 3'-UTR region of mRNAs and increases their stability. Involved in embryonic stem cells (ESCs) differentiation: preferentially binds mRNAs that are not methylated by N6-methyladenosine (m6A), stabilizing them, promoting ESCs differentiation. Binds to poly-U elements and AU-rich elements (AREs) in the 3'-UTR of target mRNAs. Acts cooperatively with cribp to stabilize AU-rich sequence (ARE)-containing mRNAs. May play a role during gastrulation. Required for the vegetal localization of vg1 mRNA. In Xenopus tropicalis (Western clawed frog), this protein is ELAV-like protein 1.